The following is a 397-amino-acid chain: Elongation factor Tu-1 (397 aa).

In terms of domain architecture, tr-type G spans 10–206 (KPHVNIGTIG…AVDEAIPEPE (197 aa)). The segment at 19-26 (GHIDHGKT) is G1. 19–26 (GHIDHGKT) contacts GTP. Threonine 26 serves as a coordination point for Mg(2+). Residues 62–66 (GITIS) form a G2 region. The G3 stretch occupies residues 83-86 (DCPG). GTP-binding positions include 83–87 (DCPGH) and 138–141 (NKAD). Positions 138–141 (NKAD) are G4. The segment at 176-178 (SAL) is G5.

The protein belongs to the TRAFAC class translation factor GTPase superfamily. Classic translation factor GTPase family. EF-Tu/EF-1A subfamily. As to quaternary structure, monomer.

Its subcellular location is the cytoplasm. The enzyme catalyses GTP + H2O = GDP + phosphate + H(+). GTP hydrolase that promotes the GTP-dependent binding of aminoacyl-tRNA to the A-site of ribosomes during protein biosynthesis. This chain is Elongation factor Tu-1, found in Streptomyces coelicolor (strain ATCC BAA-471 / A3(2) / M145).